Consider the following 151-residue polypeptide: MVKHLQDHIQFLEQFINNVNALTAKMLKDLQNEYEISLEQSNVLGMLNKEPLTISEITQRQGVNKAAVSRRIKKLIDAKLVKLDKPNLNIDQRLKFITLTDKGRAYLKERNAIMTDIAQDITNDLNSEDIENVRQVLEVINHRIKTYSNHK.

The HTH marR-type domain maps to 1–142 (MVKHLQDHIQ…VRQVLEVINH (142 aa)). A DNA-binding region (H-T-H motif) is located at residues 54–77 (ISEITQRQGVNKAAVSRRIKKLID).

In terms of biological role, involved in the antibiotic teicoplanin susceptibility. Inactivation of the tcaRAB operon leads to teicoplanin resistance. Its function is as follows. Is a weak negative regulator of transcription of the icaABD operon. The sequence is that of HTH-type transcriptional regulator TcaR (tcaR) from Staphylococcus aureus (strain COL).